Reading from the N-terminus, the 69-residue chain is Metallothionein-like protein CRS5 (69 aa).

This sequence belongs to the metallothionein superfamily. Type 13 family.

Critical role in copper (specific) homeostasis and detoxification. May protect by directly chelating and sequestering copper ions. The chain is Metallothionein-like protein CRS5 (CRS5) from Saccharomyces cerevisiae (strain RM11-1a) (Baker's yeast).